Consider the following 369-residue polypeptide: C2 calcium-dependent domain-containing protein 4A (369 aa).

2 disordered regions span residues 151–176 (PRAPGPATPAAPGCPRPPQDALARRP) and 197–240 (RSRR…PFPE). Residues 153-168 (APGPATPAAPGCPRPP) show a composition bias toward pro residues. A compositionally biased stretch (low complexity) spans 220-237 (SQSPARAPSTSPPSSRVP). The C2 domain occupies 253 to 369 (AGDALRLAAE…ELSLGALLLL (117 aa)).

The protein belongs to the C2CD4 family. Specifically expressed in endothelial cells.

The protein localises to the nucleus. May be involved in inflammatory process. May regulate cell architecture and adhesion. This Homo sapiens (Human) protein is C2 calcium-dependent domain-containing protein 4A (C2CD4A).